The primary structure comprises 407 residues: 1-deoxy-D-xylulose 5-phosphate reductoisomerase (407 aa).

The NADPH site is built by Thr25, Gly26, Ser27, Ile28, Asn53, and Asn136. Lys137 is a binding site for 1-deoxy-D-xylulose 5-phosphate. Glu138 contributes to the NADPH binding site. Residue Asp162 coordinates Mn(2+). Ser163, Glu164, Ser188, and His211 together coordinate 1-deoxy-D-xylulose 5-phosphate. Glu164 contacts Mn(2+). Gly217 lines the NADPH pocket. Residues Ser224, Asn229, Lys230, and Glu233 each contribute to the 1-deoxy-D-xylulose 5-phosphate site. Glu233 contributes to the Mn(2+) binding site.

This sequence belongs to the DXR family. Requires Mg(2+) as cofactor. Mn(2+) is required as a cofactor.

It catalyses the reaction 2-C-methyl-D-erythritol 4-phosphate + NADP(+) = 1-deoxy-D-xylulose 5-phosphate + NADPH + H(+). Its pathway is isoprenoid biosynthesis; isopentenyl diphosphate biosynthesis via DXP pathway; isopentenyl diphosphate from 1-deoxy-D-xylulose 5-phosphate: step 1/6. Catalyzes the NADPH-dependent rearrangement and reduction of 1-deoxy-D-xylulose-5-phosphate (DXP) to 2-C-methyl-D-erythritol 4-phosphate (MEP). The chain is 1-deoxy-D-xylulose 5-phosphate reductoisomerase from Rhodopseudomonas palustris (strain TIE-1).